We begin with the raw amino-acid sequence, 83 residues long: Gene 41 protein (83 aa).

The sequence is that of Gene 41 protein (41) from Mycobacterium phage L5 (Mycobacteriophage L5).